The sequence spans 570 residues: High-affinity hexose transporter HXT7 (570 aa).

The Cytoplasmic portion of the chain corresponds to 1–60; sequence MSQDAAIAEQTPVEHLSAVDSASHSVLSTPSNKAERDEIKAYGEGEEHEPVVEIPKRPAS. A helical membrane pass occupies residues 61–81; sequence AYVTVSIMCIMIAFGGFVFGW. Residues 82–116 lie on the Extracellular side of the membrane; the sequence is DTGTISGFINQTDFIRRFGMKHKDGTNYLSKVRTG. N-linked (GlcNAc...) asparagine glycosylation occurs at asparagine 91. The chain crosses the membrane as a helical span at residues 117 to 137; that stretch reads LIVSIFNIGCAIGGIILSKLG. The Cytoplasmic segment spans residues 138-143; the sequence is DMYGRK. Residues 144 to 164 form a helical membrane-spanning segment; sequence VGLIVVVVIYIIGIIIQIASI. Residues 165–174 are Extracellular-facing; it reads NKWYQYFIGR. The chain crosses the membrane as a helical span at residues 175-195; it reads IISGLGVGGIAVLSPMLISEV. Residues 196–201 are Cytoplasmic-facing; the sequence is SPKHLR. The chain crosses the membrane as a helical span at residues 202 to 222; sequence GTLVSCYQLMITAGIFLGYCT. Residues 223 to 236 lie on the Extracellular side of the membrane; it reads NFGTKNYSNSVQWR. Residue asparagine 228 is glycosylated (N-linked (GlcNAc...) asparagine). The chain crosses the membrane as a helical span at residues 237–257; it reads VPLGLCFAWALFMIGGMTFVP. The Cytoplasmic segment spans residues 258-340; that stretch reads ESPRYLAEVG…IQSLQQLTGD (83 aa). A helical transmembrane segment spans residues 341-357; the sequence is NYFFYYGTTIFKAVGLS. Residues 358-363 lie on the Extracellular side of the membrane; sequence DSFETS. A helical membrane pass occupies residues 364–381; sequence IVLGIVNFASTFVGIYVV. The Cytoplasmic segment spans residues 382-388; that stretch reads ERYGRRT. A helical transmembrane segment spans residues 389–409; sequence CLLWGAASMTACMVVYASVGV. Residues 410–431 lie on the Extracellular side of the membrane; it reads TRLWPNGQDQPSSKGAGNCMIV. The helical transmembrane segment at 432 to 452 threads the bilayer; the sequence is FACFYIFCFATTWAPIPYVVV. The Cytoplasmic portion of the chain corresponds to 453-469; the sequence is SETFPLRVKSKAMSIAT. The chain crosses the membrane as a helical span at residues 470-490; sequence AANWLWGFLIGFFTPFITGAI. A topological domain (extracellular) is located at residue asparagine 491. Residues 492 to 512 traverse the membrane as a helical segment; that stretch reads FYYGYVFMGCLVFMFFYVLLV. Over 513 to 570 the chain is Cytoplasmic; sequence VPETKGLTLEEVNTMWEEGVLPWKSASWVPPSRRGANYDAEEMTHDDKPLYKRMFSTK. Position 556 is a phosphothreonine (threonine 556). Residue lysine 560 forms a Glycyl lysine isopeptide (Lys-Gly) (interchain with G-Cter in ubiquitin) linkage.

The protein belongs to the major facilitator superfamily. Sugar transporter (TC 2.A.1.1) family.

Its subcellular location is the membrane. In terms of biological role, high-affinity glucose transporter. The sequence is that of High-affinity hexose transporter HXT7 (HXT7) from Saccharomyces cerevisiae (strain ATCC 204508 / S288c) (Baker's yeast).